The primary structure comprises 137 residues: Large ribosomal subunit protein uL16 (137 aa).

The protein belongs to the universal ribosomal protein uL16 family. In terms of assembly, part of the 50S ribosomal subunit.

Functionally, binds 23S rRNA and is also seen to make contacts with the A and possibly P site tRNAs. This chain is Large ribosomal subunit protein uL16, found in Bradyrhizobium sp. (strain ORS 278).